A 440-amino-acid chain; its full sequence is Transposon Ty1-GR2 Gag polyprotein (440 aa).

The span at methionine 1 to serine 16 shows a compositional bias: low complexity. Disordered regions lie at residues methionine 1–glutamine 93, proline 126–proline 173, and glycine 352–tyrosine 440. 2 stretches are compositionally biased toward polar residues: residues threonine 48 to serine 60 and glutamine 127 to phenylalanine 152. The span at threonine 153–threonine 165 shows a compositional bias: low complexity. The interval asparagine 299 to histidine 401 is RNA-binding. Low complexity predominate over residues asparagine 402 to serine 418. Serine 416 carries the post-translational modification Phosphoserine. Residues lysine 419 to asparagine 428 show a composition bias toward polar residues. Positions asparagine 429 to tyrosine 440 are enriched in basic and acidic residues.

Homotrimer.

Its subcellular location is the cytoplasm. Capsid protein (CA) is the structural component of the virus-like particle (VLP), forming the shell that encapsulates the retrotransposons dimeric RNA genome. The particles are assembled from trimer-clustered units and there are holes in the capsid shells that allow for the diffusion of macromolecules. CA also has nucleocapsid-like chaperone activity, promoting primer tRNA(i)-Met annealing to the multipartite primer-binding site (PBS), dimerization of Ty1 RNA and initiation of reverse transcription. The protein is Transposon Ty1-GR2 Gag polyprotein (TY1A-GR2) of Saccharomyces cerevisiae (strain ATCC 204508 / S288c) (Baker's yeast).